Consider the following 73-residue polypeptide: Toxin Td12 (73 aa).

Residues 1 to 7 (IGMVIEC) form the signal peptide. The LCN-type CS-alpha/beta domain maps to 8 to 70 (KDGYLMEPNG…TWDRATNTCG (63 aa)). Intrachain disulfides connect Cys-18/Cys-69, Cys-22/Cys-44, Cys-30/Cys-50, and Cys-34/Cys-52. At Arg-71 the chain carries Arginine amide.

This sequence belongs to the long (4 C-C) scorpion toxin superfamily. Sodium channel inhibitor family. Beta subfamily. In terms of tissue distribution, expressed by the venom gland.

It is found in the secreted. Functionally, beta toxins bind voltage-independently at site-4 of sodium channels (Nav) and shift the voltage of activation toward more negative potentials thereby affecting sodium channel activation and promoting spontaneous and repetitive firing. The polypeptide is Toxin Td12 (Tityus discrepans (Venezuelan scorpion)).